The sequence spans 804 residues: Leucine--tRNA ligase (804 aa).

Residues 39 to 50 (PFPSGKGLHVGH) carry the 'HIGH' region motif. The 'KMSKS' region signature appears at 573-577 (KMSKS). Lys-576 lines the ATP pocket.

The protein belongs to the class-I aminoacyl-tRNA synthetase family.

The protein resides in the cytoplasm. It catalyses the reaction tRNA(Leu) + L-leucine + ATP = L-leucyl-tRNA(Leu) + AMP + diphosphate. The polypeptide is Leucine--tRNA ligase (Lactobacillus helveticus (strain DPC 4571)).